Here is a 156-residue protein sequence, read N- to C-terminus: MPTHLEGDLVVDGHRFALVVGRFNEHVTEDLLGGALDTLERHGADLDEVTVVHVPGSWEIPVAAQKCARTGDYDAVICLGAVVRGETPHFDYVCSGATSGTMQTSLDTEVPVLFGILTTDTVDQAIARAGSKAGNKGREAAEAAIEMATLMPKLEG.

Residues F23, 57–59 (SWE), and 81–83 (AVV) each bind 5-amino-6-(D-ribitylamino)uracil. 86-87 (ET) serves as a coordination point for (2S)-2-hydroxy-3-oxobutyl phosphate. H89 serves as the catalytic Proton donor. A 5-amino-6-(D-ribitylamino)uracil-binding site is contributed by F114. (2S)-2-hydroxy-3-oxobutyl phosphate is bound at residue R128.

This sequence belongs to the DMRL synthase family.

The enzyme catalyses (2S)-2-hydroxy-3-oxobutyl phosphate + 5-amino-6-(D-ribitylamino)uracil = 6,7-dimethyl-8-(1-D-ribityl)lumazine + phosphate + 2 H2O + H(+). It functions in the pathway cofactor biosynthesis; riboflavin biosynthesis; riboflavin from 2-hydroxy-3-oxobutyl phosphate and 5-amino-6-(D-ribitylamino)uracil: step 1/2. In terms of biological role, catalyzes the formation of 6,7-dimethyl-8-ribityllumazine by condensation of 5-amino-6-(D-ribitylamino)uracil with 3,4-dihydroxy-2-butanone 4-phosphate. This is the penultimate step in the biosynthesis of riboflavin. The protein is 6,7-dimethyl-8-ribityllumazine synthase of Salinibacter ruber (strain DSM 13855 / M31).